Reading from the N-terminus, the 252-residue chain is Imidazole glycerol phosphate synthase subunit HisF (252 aa).

Catalysis depends on residues aspartate 11 and aspartate 130.

It belongs to the HisA/HisF family. Heterodimer of HisH and HisF.

The protein localises to the cytoplasm. It carries out the reaction 5-[(5-phospho-1-deoxy-D-ribulos-1-ylimino)methylamino]-1-(5-phospho-beta-D-ribosyl)imidazole-4-carboxamide + L-glutamine = D-erythro-1-(imidazol-4-yl)glycerol 3-phosphate + 5-amino-1-(5-phospho-beta-D-ribosyl)imidazole-4-carboxamide + L-glutamate + H(+). Its pathway is amino-acid biosynthesis; L-histidine biosynthesis; L-histidine from 5-phospho-alpha-D-ribose 1-diphosphate: step 5/9. Functionally, IGPS catalyzes the conversion of PRFAR and glutamine to IGP, AICAR and glutamate. The HisF subunit catalyzes the cyclization activity that produces IGP and AICAR from PRFAR using the ammonia provided by the HisH subunit. The polypeptide is Imidazole glycerol phosphate synthase subunit HisF (Bacillus pumilus (strain SAFR-032)).